A 150-amino-acid chain; its full sequence is Large ribosomal subunit protein bL9 (150 aa).

Belongs to the bacterial ribosomal protein bL9 family.

Functionally, binds to the 23S rRNA. This Halorhodospira halophila (strain DSM 244 / SL1) (Ectothiorhodospira halophila (strain DSM 244 / SL1)) protein is Large ribosomal subunit protein bL9.